A 570-amino-acid chain; its full sequence is Sulfite reductase [NADPH] hemoprotein beta-component (570 aa).

Positions 434, 440, 479, and 483 each coordinate [4Fe-4S] cluster. Position 483 (C483) interacts with siroheme.

This sequence belongs to the nitrite and sulfite reductase 4Fe-4S domain family. Alpha(8)-beta(8). The alpha component is a flavoprotein, the beta component is a hemoprotein. It depends on siroheme as a cofactor. Requires [4Fe-4S] cluster as cofactor.

The enzyme catalyses hydrogen sulfide + 3 NADP(+) + 3 H2O = sulfite + 3 NADPH + 4 H(+). It participates in sulfur metabolism; hydrogen sulfide biosynthesis; hydrogen sulfide from sulfite (NADPH route): step 1/1. Functionally, component of the sulfite reductase complex that catalyzes the 6-electron reduction of sulfite to sulfide. This is one of several activities required for the biosynthesis of L-cysteine from sulfate. This is Sulfite reductase [NADPH] hemoprotein beta-component from Salmonella paratyphi A (strain ATCC 9150 / SARB42).